We begin with the raw amino-acid sequence, 429 residues long: uncharacterized protein (429 aa).

Active-site charge relay system residues include S116, D179, and H206.

Belongs to the AB hydrolase 3 family.

The protein resides in the cytoplasm. Its subcellular location is the nucleus. This is an uncharacterized protein from Schizosaccharomyces pombe (strain 972 / ATCC 24843) (Fission yeast).